Here is a 322-residue protein sequence, read N- to C-terminus: HPr kinase/phosphorylase (322 aa).

Catalysis depends on residues histidine 146 and lysine 167. 161–168 (GDSGLGKS) contributes to the ATP binding site. Mg(2+) is bound at residue serine 168. The active-site Proton acceptor; for phosphorylation activity. Proton donor; for dephosphorylation activity is the aspartate 185. Residues 209-218 (LEVRGLGLLD) are important for the catalytic mechanism of both phosphorylation and dephosphorylation. Glutamate 210 is a binding site for Mg(2+). Arginine 250 is a catalytic residue. The segment at 271 to 276 (QVAAGR) is important for the catalytic mechanism of dephosphorylation.

This sequence belongs to the HPrK/P family. As to quaternary structure, homohexamer. Requires Mg(2+) as cofactor.

The catalysed reaction is [HPr protein]-L-serine + ATP = [HPr protein]-O-phospho-L-serine + ADP + H(+). The enzyme catalyses [HPr protein]-O-phospho-L-serine + phosphate + H(+) = [HPr protein]-L-serine + diphosphate. Its function is as follows. Catalyzes the ATP- as well as the pyrophosphate-dependent phosphorylation of a specific serine residue in HPr, a phosphocarrier protein of the phosphoenolpyruvate-dependent sugar phosphotransferase system (PTS). HprK/P also catalyzes the pyrophosphate-producing, inorganic phosphate-dependent dephosphorylation (phosphorolysis) of seryl-phosphorylated HPr (P-Ser-HPr). The sequence is that of HPr kinase/phosphorylase from Burkholderia lata (strain ATCC 17760 / DSM 23089 / LMG 22485 / NCIMB 9086 / R18194 / 383).